Here is a 346-residue protein sequence, read N- to C-terminus: DNA primase small subunit PriS (346 aa).

Residues Asp-95 and Asp-97 contribute to the active site. The Zn(2+) site is built by Cys-106, His-108, Cys-114, and Cys-117. Positions 106–117 (CEHEPGTVCPIC) match the Zinc knuckle motif motif. The active site involves Asp-280.

Belongs to the eukaryotic-type primase small subunit family. In terms of assembly, heterodimer of a small subunit (PriS) and a large subunit (PriL). Mg(2+) is required as a cofactor. It depends on Mn(2+) as a cofactor.

Functionally, catalytic subunit of DNA primase, an RNA polymerase that catalyzes the synthesis of short RNA molecules used as primers for DNA polymerase during DNA replication. The small subunit contains the primase catalytic core and has DNA synthesis activity on its own. Binding to the large subunit stabilizes and modulates the activity, increasing the rate of DNA synthesis while decreasing the length of the DNA fragments, and conferring RNA synthesis capability. The DNA polymerase activity may enable DNA primase to also catalyze primer extension after primer synthesis. May also play a role in DNA repair. The chain is DNA primase small subunit PriS from Pyrococcus horikoshii (strain ATCC 700860 / DSM 12428 / JCM 9974 / NBRC 100139 / OT-3).